We begin with the raw amino-acid sequence, 223 residues long: Sigma non-opioid intracellular receptor 1 (223 aa).

The Lumenal portion of the chain corresponds to 1–9 (MQWAVGRRW). Positions 2–8 (QWAVGRR) are targeting to endoplasmic reticulum-associated lipid droplets. A helical transmembrane segment spans residues 10 to 30 (AWAALLLAVAAVLTQVVWLWL). The Cytoplasmic segment spans residues 31 to 223 (GTQSFVFQRE…LTTYLFGQDP (193 aa)). The tract at residues 99 to 106 (SLSEYVLL) is important for ligand-binding. The segment at 177–223 (VIPSTLAFALADTVFSTQDFLTLFYTLRSYARGLRLELTTYLFGQDP) is C-terminal hydrophobic region.

Belongs to the ERG2 family. As to quaternary structure, homotrimer. Forms a ternary complex with ANK2 and ITPR3. The complex is disrupted by agonists. Interacts with KCNA4. Interacts with KCNA2; cocaine consumption leads to increased interaction. Interacts with RNF112 in an oxidative stress-regulated manner. In terms of tissue distribution, widely expressed with higher expression in liver, colon, prostate, placenta, small intestine, heart and pancreas. Expressed in the retina by retinal pigment epithelial cells. Expressed in alpha-motor neurons.

Its subcellular location is the nucleus inner membrane. It is found in the nucleus outer membrane. The protein localises to the nucleus envelope. It localises to the cytoplasmic vesicle. The protein resides in the endoplasmic reticulum membrane. Its subcellular location is the membrane. It is found in the lipid droplet. The protein localises to the cell junction. It localises to the cell membrane. The protein resides in the cell projection. Its subcellular location is the growth cone. It is found in the postsynaptic density membrane. In terms of biological role, functions in lipid transport from the endoplasmic reticulum and is involved in a wide array of cellular functions probably through regulation of the biogenesis of lipid microdomains at the plasma membrane. Involved in the regulation of different receptors it plays a role in BDNF signaling and EGF signaling. Also regulates ion channels like the potassium channel and could modulate neurotransmitter release. Plays a role in calcium signaling through modulation together with ANK2 of the ITP3R-dependent calcium efflux at the endoplasmic reticulum. Plays a role in several other cell functions including proliferation, survival and death. Originally identified for its ability to bind various psychoactive drugs it is involved in learning processes, memory and mood alteration. Necessary for proper mitochondrial axonal transport in motor neurons, in particular the retrograde movement of mitochondria. Plays a role in protecting cells against oxidative stress-induced cell death via its interaction with RNF112. In Homo sapiens (Human), this protein is Sigma non-opioid intracellular receptor 1 (SIGMAR1).